The sequence spans 286 residues: tRNA (guanine-N(7)-)-methyltransferase (286 aa).

2 positions are modified to phosphoserine: Ser7 and Ser59. S-adenosyl-L-methionine-binding positions include Gly103, 126 to 127 (EI), 161 to 162 (NA), and Cys181. Residue Asp184 is part of the active site. An S-adenosyl-L-methionine-binding site is contributed by 259–261 (TEE).

It belongs to the class I-like SAM-binding methyltransferase superfamily. TrmB family. Forms a complex with TRM82.

It localises to the nucleus. It carries out the reaction guanosine(46) in tRNA + S-adenosyl-L-methionine = N(7)-methylguanosine(46) in tRNA + S-adenosyl-L-homocysteine. Its pathway is tRNA modification; N(7)-methylguanine-tRNA biosynthesis. In terms of biological role, methyltransferase that catalyzes the formation of N(7)-methylguanine at position 46 (m7G46) in tRNA, a modification required to maintain stability of tRNAs; its absence resulting in tRNA decay. Both the D-stem and T-stem structures of tRNAs are required for efficient methyltransferase activity. The polypeptide is tRNA (guanine-N(7)-)-methyltransferase (Saccharomyces cerevisiae (strain RM11-1a) (Baker's yeast)).